Reading from the N-terminus, the 187-residue chain is UPF0301 protein VC_0467 (187 aa).

This sequence belongs to the UPF0301 (AlgH) family.

The protein is UPF0301 protein VC_0467 of Vibrio cholerae serotype O1 (strain ATCC 39315 / El Tor Inaba N16961).